Reading from the N-terminus, the 461-residue chain is Serine/threonine-protein kinase 4 homolog A (461 aa).

The 254-residue stretch at 20 to 273 (FTIVEKLGEG…AEELLKHPFI (254 aa)) folds into the Protein kinase domain. Residues 26 to 34 (LGEGSYGSV) and K49 each bind ATP. D139 functions as the Proton acceptor in the catalytic mechanism. Residue T173 is modified to Phosphothreonine; by autocatalysis. Disordered stretches follow at residues 303–349 (GIEQ…EEYD) and 369–388 (NDDEDSGTMKLKNTMPSNKK). Acidic residues predominate over residues 307–322 (RDEEEEDEDEDSEDSD). Residues 411–458 (SDKYSSYSLEELKKMLAELEIEREKEVQKTLEKFSINRQALLAVIDEK) form the SARAH domain.

It belongs to the protein kinase superfamily. STE Ser/Thr protein kinase family. STE20 subfamily. Mn(2+) serves as cofactor. Post-translationally, undergoes autophosphorylation in the catalytic domain.

The protein resides in the cytoplasm. Its subcellular location is the cytosol. It carries out the reaction L-seryl-[protein] + ATP = O-phospho-L-seryl-[protein] + ADP + H(+). The enzyme catalyses L-threonyl-[protein] + ATP = O-phospho-L-threonyl-[protein] + ADP + H(+). In terms of biological role, regulates both cAMP signaling during early development and the stress response. Functions as an activator of adenylylcyclase. The protein is Serine/threonine-protein kinase 4 homolog A (krsA) of Dictyostelium discoideum (Social amoeba).